The following is a 428-amino-acid chain: MSAFIVLGAQWGDEGKGKMTDYLAENADVVVRFQGGNNAGHTVVVGEKEYKLHLIPSGILYNDKLNVIGNGVVLDPKALFEEINYLESLGVEITPDRLIISDRAHVIMPYHRVLDGIKERARGNKDIGTTGKGIGPSYTDKMERSGIRVCDLIHKEVFEENLKETLEVKNKIITEVFGEEALDYDEIYNEYLGYAEKLRPFVKDISVIVNKKIKDGKEVLFEGAQGTLLDIDYGTYPYVTSSSTIAGGVCIGAGVGPTAITNAVGIAKAYTTRVGKGPFPTELLDSTGDWVREKGHEFGVTTGRARRCGWLDLVILKTSARVSGLTSFAVTKIDTLAGLDTLKVCTGYRLNGEIIDYVPASLEDLAKCKPIYEEFQGWDDSIANARCYKDLPENAIKYLKKIEDFTETKVSIVSVGPKRDQTMIISEI.

GTP is bound by residues 12–18 (GDEGKGK) and 40–42 (GHT). The Proton acceptor role is filled by Asp-13. Mg(2+) is bound by residues Asp-13 and Gly-40. IMP is bound by residues 13–16 (DEGK), 38–41 (NAGH), Thr-130, Arg-144, Gln-225, Thr-240, and Arg-304. His-41 acts as the Proton donor in catalysis. 300–306 (VTTGRAR) contacts substrate. GTP-binding positions include Arg-306, 332–334 (KID), and 414–416 (SVG).

It belongs to the adenylosuccinate synthetase family. Homodimer. It depends on Mg(2+) as a cofactor.

The protein localises to the cytoplasm. The enzyme catalyses IMP + L-aspartate + GTP = N(6)-(1,2-dicarboxyethyl)-AMP + GDP + phosphate + 2 H(+). The protein operates within purine metabolism; AMP biosynthesis via de novo pathway; AMP from IMP: step 1/2. In terms of biological role, plays an important role in the de novo pathway of purine nucleotide biosynthesis. Catalyzes the first committed step in the biosynthesis of AMP from IMP. The polypeptide is Adenylosuccinate synthetase (Clostridium botulinum (strain 657 / Type Ba4)).